The chain runs to 397 residues: Izumo sperm-egg fusion protein 1 (397 aa).

An N-terminal signal peptide occupies residues 1 to 21 (MGPHFTLLLAALANCLCPGRP). Cystine bridges form between Cys22-Cys149, Cys25-Cys152, Cys135-Cys159, Cys139-Cys165, and Cys182-Cys233. Over 22–319 (CIKCDQFVTD…QNPEKKMKTR (298 aa)) the chain is Extracellular. The interval 148–160 (WCLKCEKQLHICR) is important for interaction with IZUMO1R. In terms of domain architecture, Ig-like C2-type spans 167–251 (ERHIEVHRSE…HATVIRYDVT (85 aa)). N-linked (GlcNAc...) asparagine glycosylation occurs at Asn204. Residues 271–292 (EHETPVHVTPQTPPGQEPESEL) form a disordered region. A helical membrane pass occupies residues 320 to 340 (LLILLTLGFVVLVASIIISVL). At 341–397 (HFRKVSAKLKNASDEVKPTASGSKSDQSLSQQMGLKKASQADFNSDYSGDKSEATEN) the chain is on the cytoplasmic side. Residues 351–397 (NASDEVKPTASGSKSDQSLSQQMGLKKASQADFNSDYSGDKSEATEN) form a disordered region. The span at 360–373 (ASGSKSDQSLSQQM) shows a compositional bias: polar residues. Ser379 is modified (phosphoserine). Residues 388-397 (SGDKSEATEN) are compositionally biased toward basic and acidic residues.

It belongs to the Izumo family. As to quaternary structure, monomer, homodimer; disulfide-linked and homooligomer; depending on the context. Interacts with IZUMO1R/JUNO. IZUMO1 and IZUMO1R/JUNO form a complex with 1:1 stoichiometry. In gamete recognition, IZUMO1R/JUNO first binds to monomeric IZUMO1. The weak, but specific interaction with IZUMO1R/JUNO induces IZUMO1 homodimerization. The process follows a tight binding phase where IZUMO1 bends the entire structure towards the sperm membrane side through a thiol-disulfide exchange reaction. The molecule no longer binds to IZUMO1R/JUNO and instead binds to a putative second oocyte receptor. Interacts with ACE3. Part of a oolemmal binding multimeric complex (IZUMO1 complex) composed at least of IZUMO1 and GLIPR1L1; the complex assemblage is influenced by the maturation status of the male germ cell. Interacts with GLIPR1L1. Interacts with FREY; the interaction retains IZUMO1 at the endoplasmic reticulum membrane and coordinates IZUMO1 complex assembly. Interacts with WDR54. Forms a complex with SPACA6 and TMEM81 on spermatocyte cell membrane. Post-translationally, N-glycosylated. Glycosylation is not essential for fusion and for proper protein trafficking in sperm. Phosphorylated. The cytoplasmic C-terminus is phosphorylated and undergoes phosphorylation changes during epididymal transit. Sperm-specific (at protein level). Detectable on sperm surface only after the acrosome reaction. Expressed in spermatozoa, more abundantly expressed in the head than the tail (at protein level).

The protein resides in the cell membrane. The protein localises to the cytoplasmic vesicle. Its subcellular location is the secretory vesicle. It localises to the acrosome membrane. Essential sperm cell-surface protein required for fertilization by acting as a ligand for IZUMO1R/JUNO receptor on egg. The IZUMO1:IZUMO1R/JUNO interaction is a necessary adhesion event between sperm and egg that is required for fertilization but is not sufficient for cell fusion. The ligand-receptor interaction probably does not act as a membrane 'fusogen'. Plays a critical role in sperm-oolemma binding prior to plasma membrane fusion. Can mediate cell-cell fusion in cultured mammalian cells independently of its binding to IZUMO1R/JUNO. The polypeptide is Izumo sperm-egg fusion protein 1 (Mus musculus (Mouse)).